The following is a 564-amino-acid chain: Proline--tRNA ligase 1 (564 aa).

Belongs to the class-II aminoacyl-tRNA synthetase family. ProS type 1 subfamily. In terms of assembly, homodimer.

It localises to the cytoplasm. It carries out the reaction tRNA(Pro) + L-proline + ATP = L-prolyl-tRNA(Pro) + AMP + diphosphate. Functionally, catalyzes the attachment of proline to tRNA(Pro) in a two-step reaction: proline is first activated by ATP to form Pro-AMP and then transferred to the acceptor end of tRNA(Pro). As ProRS can inadvertently accommodate and process non-cognate amino acids such as alanine and cysteine, to avoid such errors it has two additional distinct editing activities against alanine. One activity is designated as 'pretransfer' editing and involves the tRNA(Pro)-independent hydrolysis of activated Ala-AMP. The other activity is designated 'posttransfer' editing and involves deacylation of mischarged Ala-tRNA(Pro). The misacylated Cys-tRNA(Pro) is not edited by ProRS. This is Proline--tRNA ligase 1 from Streptomyces avermitilis (strain ATCC 31267 / DSM 46492 / JCM 5070 / NBRC 14893 / NCIMB 12804 / NRRL 8165 / MA-4680).